Reading from the N-terminus, the 306-residue chain is Curved DNA-binding protein (306 aa).

One can recognise a J domain in the interval 5–69 (DYYAIMGVKP…QRRAEYDQMW (65 aa)).

It localises to the cytoplasm. The protein resides in the nucleoid. Its function is as follows. DNA-binding protein that preferentially recognizes a curved DNA sequence. It is probably a functional analog of DnaJ; displays overlapping activities with DnaJ, but functions under different conditions, probably acting as a molecular chaperone in an adaptive response to environmental stresses other than heat shock. Lacks autonomous chaperone activity; binds native substrates and targets them for recognition by DnaK. Its activity is inhibited by the binding of CbpM. The chain is Curved DNA-binding protein from Shigella boydii serotype 18 (strain CDC 3083-94 / BS512).